The chain runs to 77 residues: UPF0154 protein LCK_00994 (77 aa).

A helical membrane pass occupies residues 5–25 (FGILIFVLGLVIGLVIGFFVA). Positions 50 to 77 (SMGQKPSQKKLNQMMAQMKQQSEQSQKK) are disordered.

Belongs to the UPF0154 family.

It localises to the cell membrane. The sequence is that of UPF0154 protein LCK_00994 from Leuconostoc citreum (strain KM20).